Reading from the N-terminus, the 545-residue chain is Triacylglycerol lipase ptl1 (545 aa).

Residues 182–358 form the PNPLA domain; the sequence is LYFNGGTAFG…EVCTPKNFIW (177 aa). The short motif at 213–217 is the GXSXG element; sequence GCASG.

Its subcellular location is the lipid droplet. It carries out the reaction a triacylglycerol + H2O = a diacylglycerol + a fatty acid + H(+). Its function is as follows. Lipid particle-localized triacylglycerol (TAG) lipase. The lipid droplet/particle is a lipid storage compartment which serves as a depot of energy and building blocks for membrane lipid biosynthesis. Involved in the mobilization of the non-polar storage lipids triacylglycerols (TAGs) from lipid particles by hydrolysis of TAGs, releasing and supplying specific fatty acids to the appropriate metabolic pathways. The sequence is that of Triacylglycerol lipase ptl1 (ptl1) from Schizosaccharomyces pombe (strain 972 / ATCC 24843) (Fission yeast).